The primary structure comprises 218 residues: MTDTKIKGILGTKLGMTQVFDENNRVVPVTVVKAGPNVVTQIRTEERDGYSAVQLAFGAIDPRKVNKPTSGQFAKAGVTPRRHVVELRVADTSEYEVGQELTAEVFEDGAYVDVTGTSKGKGFAGTMKRHGFAGQGASHGAQAVHRRPGSIGGCATPGRVFKGMRMSGRMGSDRITTQNLSVHKVDAENGLLLIKGAIPGRKGGLVIVKSAVKGGARA.

This sequence belongs to the universal ribosomal protein uL3 family. In terms of assembly, part of the 50S ribosomal subunit. Forms a cluster with proteins L14 and L19.

One of the primary rRNA binding proteins, it binds directly near the 3'-end of the 23S rRNA, where it nucleates assembly of the 50S subunit. This chain is Large ribosomal subunit protein uL3, found in Rhodococcus jostii (strain RHA1).